The sequence spans 396 residues: Interactor of constitutive active ROPs 5 (396 aa).

Disordered regions lie at residues 1 to 49 (MQTP…TQIP) and 99 to 122 (ALKREAQEEAEDAKHQLMDINASE). Coiled coils occupy residues 67-124 (KKRT…SEDS) and 158-366 (LSSA…TAAS). The span at 99-115 (ALKREAQEEAEDAKHQL) shows a compositional bias: basic and acidic residues.

This sequence belongs to the ICR family. Component of the active ARAC10-IRC5-KIN13A complex. Homooligomer. Interacts (via C-terminus) with ARAC4, ARAC10, ARAC11 and (via N-terminus) with KIN13A (via C-terminus), but no interactions with SEC3A. In terms of tissue distribution, expressed in xylem cells in the roots and in stamens, petals and pollen.

The protein resides in the cell membrane. The protein localises to the cytoplasm. It localises to the cytoskeleton. Functionally, ROP effector binding specifically activated ROPs and linking them to the microtubule cytoskeleton. Involved in ROP-regulated polar growth. Involved in local disassembly of cortical microtubules when associated with ARAC10 and KIN13A and conversely also mediates the elimination of ARAC10 from the plasma membrane by the cortical microtubules. Accumulates at the plus end of shrinking microtubules. Targets KIN13A to microtubules. The chain is Interactor of constitutive active ROPs 5 (ICR5) from Arabidopsis thaliana (Mouse-ear cress).